The sequence spans 501 residues: Ribose import ATP-binding protein RbsA (501 aa).

2 ABC transporter domains span residues 5–241 (LQLK…VGRK) and 252–495 (APGD…VGKL). 37-44 (GENGAGKS) serves as a coordination point for ATP.

It belongs to the ABC transporter superfamily. Ribose importer (TC 3.A.1.2.1) family. As to quaternary structure, the complex is composed of an ATP-binding protein (RbsA), two transmembrane proteins (RbsC) and a solute-binding protein (RbsB).

The protein resides in the cell inner membrane. The catalysed reaction is D-ribose(out) + ATP + H2O = D-ribose(in) + ADP + phosphate + H(+). Part of the ABC transporter complex RbsABC involved in ribose import. Responsible for energy coupling to the transport system. In Escherichia coli (strain UTI89 / UPEC), this protein is Ribose import ATP-binding protein RbsA.